Here is a 71-residue protein sequence, read N- to C-terminus: MVPPVQVSPLIKFGRYSALIIGMAYGAKRYSYLKPRAEEERRIAAEEKKRLDELKRIERELAEAQDDSILK.

Lys34 carries the N6-acetyllysine modification. Position 68 is a phosphoserine (Ser68).

This sequence belongs to the ATPase e subunit family. Component of the ATP synthase complex composed at least of ATP5F1A/subunit alpha, ATP5F1B/subunit beta, ATP5MC1/subunit c (homooctomer), MT-ATP6/subunit a, MT-ATP8/subunit 8, ATP5ME/subunit e, ATP5MF/subunit f, ATP5MG/subunit g, ATP5MK/subunit k, ATP5MJ/subunit j, ATP5F1C/subunit gamma, ATP5F1D/subunit delta, ATP5F1E/subunit epsilon, ATP5PF/subunit F6, ATP5PB/subunit b, ATP5PD/subunit d, ATP5PO/subunit OSCP. ATP synthase complex consists of a soluble F(1) head domain (subunits alpha(3) and beta(3)) - the catalytic core - and a membrane F(0) domain - the membrane proton channel (subunits c, a, 8, e, f, g, k and j). These two domains are linked by a central stalk (subunits gamma, delta, and epsilon) rotating inside the F1 region and a stationary peripheral stalk (subunits F6, b, d, and OSCP). As to expression, mammary gland, liver, kidney, heart, spleen, brain and lung.

The protein resides in the mitochondrion. It is found in the mitochondrion inner membrane. Subunit e, of the mitochondrial membrane ATP synthase complex (F(1)F(0) ATP synthase or Complex V) that produces ATP from ADP in the presence of a proton gradient across the membrane which is generated by electron transport complexes of the respiratory chain. ATP synthase complex consist of a soluble F(1) head domain - the catalytic core - and a membrane F(1) domain - the membrane proton channel. These two domains are linked by a central stalk rotating inside the F(1) region and a stationary peripheral stalk. During catalysis, ATP synthesis in the catalytic domain of F(1) is coupled via a rotary mechanism of the central stalk subunits to proton translocation. In vivo, can only synthesize ATP although its ATP hydrolase activity can be activated artificially in vitro. Part of the complex F(0) domain. The polypeptide is ATP synthase F(0) complex subunit e, mitochondrial (Mus musculus (Mouse)).